We begin with the raw amino-acid sequence, 308 residues long: Glycine--tRNA ligase alpha subunit (308 aa).

This sequence belongs to the class-II aminoacyl-tRNA synthetase family. Tetramer of two alpha and two beta subunits.

It localises to the cytoplasm. It carries out the reaction tRNA(Gly) + glycine + ATP = glycyl-tRNA(Gly) + AMP + diphosphate. The polypeptide is Glycine--tRNA ligase alpha subunit (Polaromonas naphthalenivorans (strain CJ2)).